A 146-amino-acid polypeptide reads, in one-letter code: uncharacterized protein (146 aa).

Residues 7–27 (FVLSITIVLVILIIIAFIWYN) traverse the membrane as a helical segment.

This sequence belongs to the asfivirus E146L family.

The protein resides in the host membrane. It is found in the virion. This is an uncharacterized protein from Ornithodoros (relapsing fever ticks).